The primary structure comprises 479 residues: Glutamate--tRNA ligase (479 aa).

The 'HIGH' region signature appears at 9-19; the sequence is PSPTGNLHIGT. Residues 243–247 carry the 'KMSKS' region motif; that stretch reads KLSKR. K246 contacts ATP.

The protein belongs to the class-I aminoacyl-tRNA synthetase family. Glutamate--tRNA ligase type 1 subfamily. Monomer.

It localises to the cytoplasm. It carries out the reaction tRNA(Glu) + L-glutamate + ATP = L-glutamyl-tRNA(Glu) + AMP + diphosphate. Functionally, catalyzes the attachment of glutamate to tRNA(Glu) in a two-step reaction: glutamate is first activated by ATP to form Glu-AMP and then transferred to the acceptor end of tRNA(Glu). This is Glutamate--tRNA ligase from Synechococcus sp. (strain JA-3-3Ab) (Cyanobacteria bacterium Yellowstone A-Prime).